The primary structure comprises 171 residues: Probable deoxyuridine 5'-triphosphate nucleotidohydrolase (171 aa).

Belongs to the dCTP deaminase family. Archaeal dUTPase subfamily.

It carries out the reaction dUTP + H2O = dUMP + diphosphate + H(+). Its pathway is pyrimidine metabolism; dUMP biosynthesis; dUMP from dCTP (dUTP route): step 2/2. Functionally, this enzyme is involved in nucleotide metabolism: it produces dUMP, the immediate precursor of thymidine nucleotides and it decreases the intracellular concentration of dUTP so that uracil cannot be incorporated into DNA. The polypeptide is Probable deoxyuridine 5'-triphosphate nucleotidohydrolase (Methanosarcina acetivorans (strain ATCC 35395 / DSM 2834 / JCM 12185 / C2A)).